We begin with the raw amino-acid sequence, 283 residues long: Elongation factor Ts (283 aa).

Residues 80–83 (TDFV) form an involved in Mg(2+) ion dislocation from EF-Tu region.

It belongs to the EF-Ts family.

It is found in the cytoplasm. Its function is as follows. Associates with the EF-Tu.GDP complex and induces the exchange of GDP to GTP. It remains bound to the aminoacyl-tRNA.EF-Tu.GTP complex up to the GTP hydrolysis stage on the ribosome. In Serratia proteamaculans (strain 568), this protein is Elongation factor Ts.